The chain runs to 412 residues: Multifunctional CCA protein (412 aa).

Residues Gly-8 and Arg-11 each coordinate ATP. Residues Gly-8 and Arg-11 each contribute to the CTP site. Residues Asp-21 and Asp-23 each coordinate Mg(2+). Residues Arg-91, Arg-137, and Arg-140 each contribute to the ATP site. CTP-binding residues include Arg-91, Arg-137, and Arg-140. The HD domain occupies 228 to 329; it reads TGIHTLMTLS…VKLFDSIDAW (102 aa).

The protein belongs to the tRNA nucleotidyltransferase/poly(A) polymerase family. Bacterial CCA-adding enzyme type 1 subfamily. In terms of assembly, monomer. Can also form homodimers and oligomers. Mg(2+) serves as cofactor. Ni(2+) is required as a cofactor.

It catalyses the reaction a tRNA precursor + 2 CTP + ATP = a tRNA with a 3' CCA end + 3 diphosphate. The catalysed reaction is a tRNA with a 3' CCA end + 2 CTP + ATP = a tRNA with a 3' CCACCA end + 3 diphosphate. Functionally, catalyzes the addition and repair of the essential 3'-terminal CCA sequence in tRNAs without using a nucleic acid template. Adds these three nucleotides in the order of C, C, and A to the tRNA nucleotide-73, using CTP and ATP as substrates and producing inorganic pyrophosphate. tRNA 3'-terminal CCA addition is required both for tRNA processing and repair. Also involved in tRNA surveillance by mediating tandem CCA addition to generate a CCACCA at the 3' terminus of unstable tRNAs. While stable tRNAs receive only 3'-terminal CCA, unstable tRNAs are marked with CCACCA and rapidly degraded. The protein is Multifunctional CCA protein of Shigella flexneri serotype 5b (strain 8401).